A 245-amino-acid polypeptide reads, in one-letter code: MSQVNMRDMLKAGVHFGHQTRYWNPKMGKYIFGARNKIHIINLEKTLPMFNDALAFVERLAQGKNKIMFVGTKRSAGKIVAEQAARCGSPYVDHRWLGGMLTNYKTIRASIKRLRDLETQAEDGTFAKLTKKEALMRSRDLEKLDRSLGGIKDMGGLPDALFVIDVDHERIAITEANKLGIPVIGVVDTNSSPEGVDFVIPGNDDAIRAIELYMTSMADAVIRGRNNVAGGTEVYAEEAAAPAAE.

It belongs to the universal ribosomal protein uS2 family.

This Pseudomonas entomophila (strain L48) protein is Small ribosomal subunit protein uS2.